The sequence spans 464 residues: Meiotic plaque component protein 54 (464 aa).

The disordered stretch occupies residues 71–102 (SISTTITPNKSSLKSPRGKRASKNSFDNETKL). Coiled-coil stretches lie at residues 99 to 119 (ETKL…VNRC), 156 to 193 (KAEC…DHLL), and 231 to 365 (SINS…LQTQ).

Interacts directly with SPO21/MPC70, NUD1, SPO74 and SPC42. Probable component of a spindle pole body (SPB) complex composed of ADY3, SSP1, DON1, MPC54, SPO21/MPC70, NUD1 and CNM67.

The protein localises to the prospore membrane. The protein resides in the cytoplasm. It is found in the cytoskeleton. It localises to the microtubule organizing center. Its subcellular location is the spindle pole body. The protein localises to the spindle pole. In terms of biological role, involved in the pathway that organizes the shaping and sizing of the prospore membrane (PSM) during sporulation. This Saccharomyces cerevisiae (strain ATCC 204508 / S288c) (Baker's yeast) protein is Meiotic plaque component protein 54 (MPC54).